A 664-amino-acid chain; its full sequence is Cytoskeleton-associated protein 2 (664 aa).

Positions 1–38 (MAESRKRFLGRAARNPLPVTRDLQLPPTRRDQPAFREQ) are disordered. A compositionally biased stretch (basic and acidic residues) spans 28 to 38 (TRRDQPAFREQ). An association with alpha- and beta-tubulin region spans residues 160–319 (PKQDSNVSKK…ASKDAARTDS (160 aa)). Position 186 is a phosphoserine (S186). Disordered stretches follow at residues 254 to 273 (IRSLHSSSHGAAKQGLSRPL), 283 to 328 (LDKE…MVKP), 366 to 393 (GKGKGLKRPPHSVVTQAEPKGQSENPVG), and 512 to 545 (AHATKEPIQEVNADANVGSGKPGEENEHHGKVEV). Residues 300 to 309 (GSSQAPSRSI) show a composition bias toward polar residues. Positions 366–375 (GKGKGLKRPP) are enriched in basic residues. Residues 533–545 (PGEENEHHGKVEV) show a composition bias toward basic and acidic residues. Residue T561 is modified to Phosphothreonine. S577 is modified (phosphoserine). Phosphothreonine is present on T579. S584 carries the phosphoserine modification.

This sequence belongs to the CKAP2 family. As to quaternary structure, associates with alpha- and beta-tubulins.

Its subcellular location is the cytoplasm. The protein resides in the cytoskeleton. The protein localises to the spindle. It localises to the spindle pole. Its function is as follows. Possesses microtubule stabilizing properties. Involved in regulating aneuploidy, cell cycling, and cell death in a p53-dependent manner. This Mus musculus (Mouse) protein is Cytoskeleton-associated protein 2.